The sequence spans 286 residues: Phycobilisome 31.8 kDa linker polypeptide, phycoerythrin-associated, rod (286 aa).

One can recognise a PBS-linker domain in the interval 2 to 179; the sequence is PFGPASRLGV…LVRGASSSSL (178 aa). The CpcD-like domain occupies 231–286; it reads GKVYRIEVTGYRAKTFNNISKFRRSNQVFLVPYEKLSQEYQRIHQQGGVIASITPV.

The protein belongs to the phycobilisome linker protein family. The phycobilisome is a hemidiscoidal structure that is composed of two distinct substructures: a core complex and six rods radiating from the core.

The protein resides in the cellular thylakoid membrane. Its function is as follows. Rod linker protein, associated with phycoerythrocyanin. Linker polypeptides determine the state of aggregation and the location of the disk-shaped phycobiliprotein units within the phycobilisome and modulate their spectroscopic properties in order to mediate a directed and optimal energy transfer. This Microchaete diplosiphon (Fremyella diplosiphon) protein is Phycobilisome 31.8 kDa linker polypeptide, phycoerythrin-associated, rod (cpeC).